An 818-amino-acid polypeptide reads, in one-letter code: Phenylalanine--tRNA ligase beta subunit (818 aa).

Residues 39–148 (AAELQKFEVA…EDAVVGENFT (110 aa)) enclose the tRNA-binding domain. The B5 domain maps to 423-498 (SQKKPLDFSA…RIYGYDKIES (76 aa)). The Mg(2+) site is built by aspartate 476, aspartate 482, glutamate 485, and glutamate 486. In terms of domain architecture, FDX-ACB spans 724–817 (SDFQANFRDY…ISQKFQGTLR (94 aa)).

Belongs to the phenylalanyl-tRNA synthetase beta subunit family. Type 1 subfamily. In terms of assembly, tetramer of two alpha and two beta subunits. Mg(2+) is required as a cofactor.

The protein resides in the cytoplasm. The enzyme catalyses tRNA(Phe) + L-phenylalanine + ATP = L-phenylalanyl-tRNA(Phe) + AMP + diphosphate + H(+). This is Phenylalanine--tRNA ligase beta subunit from Rickettsia conorii (strain ATCC VR-613 / Malish 7).